The sequence spans 326 residues: Virulence-associated V antigen (326 aa).

The protein resides in the secreted. Functionally, possibly involved in calcium regulation of YOP expression, which includes the export process. The protein is Virulence-associated V antigen (lcrV) of Yersinia pestis.